The following is a 112-amino-acid chain: C-type natriuretic peptide 3 (112 aa).

The first 19 residues, 1–19, serve as a signal peptide directing secretion; that stretch reads MSLRAFMLCVCLLLQSVGA. Positions 20 to 90 are excised as a propeptide; the sequence is RPASELQNLE…SKRSWGRYKK (71 aa). The tract at residues 33 to 67 is disordered; it reads QDQLSSTEHPEEDRLDRTREEPQLGGSSSREAADE. A compositionally biased stretch (basic and acidic residues) spans 40–54; sequence EHPEEDRLDRTREEP. Cysteines 96 and 112 form a disulfide.

It belongs to the natriuretic peptide family. Spinal cord, kidney, ovary, heart and spleen, and to a lower extent in brain and liver.

It localises to the secreted. Exhibits natriuretic and vasodepressant activity. Has cGMP-stimulating activity. May help to regulate body fluid homeostasis in a variety of aquatic environments. This is C-type natriuretic peptide 3 from Oryzias latipes (Japanese rice fish).